The following is a 386-amino-acid chain: Protein DOM34 (386 aa).

It belongs to the eukaryotic release factor 1 family. Pelota subfamily. As to quaternary structure, monomer. Component of the Dom34-Hbs1 complex, also named Pelota-HBS1L complex, composed of DOM34 and HBS1. Requires a divalent metal cation as cofactor.

The protein resides in the cytoplasm. Its function is as follows. Component of the Dom34-Hbs1 complex, a complex that recognizes stalled ribosomes and triggers the No-Go Decay (NGD) pathway. In the Dom34-Hbs1 complex, DOM34 recognizes ribosomes stalled at the 3' end of an mRNA and engages stalled ribosomes by destabilizing mRNA in the mRNA channel. Following ribosome-binding, the Dom34-Hbs1 complex promotes the disassembly of stalled ribosomes, followed by degradation of damaged mRNAs as part of the NGD pathway. The Dom34-Hbs1 complex is also involved in non-functional rRNA decay. The polypeptide is Protein DOM34 (Saccharomyces cerevisiae (strain ATCC 204508 / S288c) (Baker's yeast)).